The primary structure comprises 582 residues: External alternative NADH-ubiquinone oxidoreductase, mitochondrial (582 aa).

The transit peptide at 1-30 (MLRLRPAVRAVSVARSVALTRSLHVSVAKF) directs the protein to the mitochondrion. The disordered stretch occupies residues 46 to 65 (KQTAGHQGHHQEIPKPDENH). The span at 54-65 (HHQEIPKPDENH) shows a compositional bias: basic and acidic residues. 114 to 144 (TLVVLGSGWGSVSFLKKLDTSNYNVIVVSPR) contributes to the FAD binding site. 277–313 (LHTVVVGGGPTGVEFAAELQDFFEDDLRKWIPDIRDD) provides a ligand contact to NAD(+). Residues 454-501 (LLNGIAKTEDLNNEITNLEKQSEHTFDEQERKNIFAQLESKSRKLRRS) adopt a coiled-coil conformation.

It belongs to the NADH dehydrogenase family. Requires FAD as cofactor.

The protein resides in the mitochondrion inner membrane. The catalysed reaction is a quinone + NADH + H(+) = a quinol + NAD(+). The enzyme catalyses a ubiquinone + NADH + H(+) = a ubiquinol + NAD(+). Alternative NADH-ubiquinone oxidoreductase which catalyzes the oxidation of mitochondrial NADH does not translocate protons across the inner mitochondrial membrane. The protein is External alternative NADH-ubiquinone oxidoreductase, mitochondrial (NDH2) of Yarrowia lipolytica (strain CLIB 122 / E 150) (Yeast).